A 462-amino-acid chain; its full sequence is Tryptophan dimethylallyltransferase ifgA (462 aa).

Residues 83–84 and glutamate 92 contribute to the L-tryptophan site; that span reads IL. 3 residues coordinate substrate: arginine 103, lysine 189, and tyrosine 191. L-tryptophan contacts are provided by tyrosine 193 and arginine 246. Substrate is bound by residues arginine 259, lysine 261, tyrosine 263, glutamine 345, and tyrosine 347.

The protein belongs to the tryptophan dimethylallyltransferase family. In terms of assembly, homodimer.

The enzyme catalyses L-tryptophan + dimethylallyl diphosphate = 4-(3-methylbut-2-enyl)-L-tryptophan + diphosphate. It participates in alkaloid biosynthesis; ergot alkaloid biosynthesis. In terms of biological role, tryptophan dimethylallyltransferase; part of the gene cluster that mediates the biosynthesis of isofumigaclavines, fungal ergot alkaloids. The tryptophan dimethylallyltransferase ifgA catalyzes the first step of ergot alkaloid biosynthesis by condensing dimethylallyl diphosphate (DMAP) and tryptophan to form 4-dimethylallyl-L-tryptophan. The second step is catalyzed by the methyltransferase ifgB that methylates 4-dimethylallyl-L-tryptophan in the presence of S-adenosyl-L-methionine, resulting in the formation of N-methyl-dimethylallyl-L-tryptophan. The catalase ifgD and the FAD-dependent oxidoreductase ifgC then transform N-methyl-dimethylallyl-L-tryptophan to chanoclavine-I which is further oxidized by ifgE in the presence of NAD(+), resulting in the formation of chanoclavine-I aldehyde. The chanoclavine-I aldehyde reductases ifgG and/or fgaOx3 reduce chanoclavine-I aldehyde to dihydrochanoclavine-I aldehyde that spontaneously dehydrates to form 6,8-dimethyl-6,7-didehydroergoline. The festuclavine dehydrogenases ifgF1 and/or ifgF2 then catalyze the reduction of 6,8-dimethyl-6,7-didehydroergoline to form festuclavine. Hydrolysis of festuclavine by a yet undetermined cytochrome P450 monooxygenase (called ifgH) then leads to the formation of isofumigaclavine B which is in turn acetylated by ifgI to isofumigaclavine A. Penicillium roqueforti has interestingly at least two sets of genes for the consumption of chanoclavine-I aldehyde on three different loci, the OYEs ifgG/fgaOx3 and the festuclavine synthase homologs ifgF1/ifgF2. The reason for the duplication of these genes is unclear, probably to ensure the conversion of chanoclavine-I aldehyde by differential gene expression under various environmental conditions. In Penicillium roqueforti (strain FM164), this protein is Tryptophan dimethylallyltransferase ifgA.